Reading from the N-terminus, the 225-residue chain is Orotate phosphoribosyltransferase (225 aa).

5-phospho-alpha-D-ribose 1-diphosphate is bound by residues Arg-107, Lys-108, Lys-111, and 133 to 141; that span reads EDLTTDGGS. Position 137 (Thr-137) interacts with orotate.

The protein belongs to the purine/pyrimidine phosphoribosyltransferase family. PyrE subfamily. Homodimer. The cofactor is Mg(2+).

It catalyses the reaction orotidine 5'-phosphate + diphosphate = orotate + 5-phospho-alpha-D-ribose 1-diphosphate. It participates in pyrimidine metabolism; UMP biosynthesis via de novo pathway; UMP from orotate: step 1/2. Catalyzes the transfer of a ribosyl phosphate group from 5-phosphoribose 1-diphosphate to orotate, leading to the formation of orotidine monophosphate (OMP). This Roseobacter denitrificans (strain ATCC 33942 / OCh 114) (Erythrobacter sp. (strain OCh 114)) protein is Orotate phosphoribosyltransferase.